We begin with the raw amino-acid sequence, 341 residues long: Uroporphyrinogen decarboxylase (341 aa).

Residues 23–27, D73, Y147, S202, and H318 contribute to the substrate site; that span reads RQAGR.

Belongs to the uroporphyrinogen decarboxylase family. In terms of assembly, homodimer.

The protein localises to the cytoplasm. The catalysed reaction is uroporphyrinogen III + 4 H(+) = coproporphyrinogen III + 4 CO2. Its pathway is porphyrin-containing compound metabolism; protoporphyrin-IX biosynthesis; coproporphyrinogen-III from 5-aminolevulinate: step 4/4. Catalyzes the decarboxylation of four acetate groups of uroporphyrinogen-III to yield coproporphyrinogen-III. In Erythrobacter litoralis (strain HTCC2594), this protein is Uroporphyrinogen decarboxylase.